An 80-amino-acid polypeptide reads, in one-letter code: MKGIILFISCLMLIDVVVESRDAYPADWRGCKFSCFWGSSSWCNEECTSLGGSSGYCAWPACWCYGLPDSVRYYNNKCHK.

The N-terminal stretch at 1–20 (MKGIILFISCLMLIDVVVES) is a signal peptide. An LCN-type CS-alpha/beta domain is found at 21-79 (RDAYPADWRGCKFSCFWGSSSWCNEECTSLGGSSGYCAWPACWCYGLPDSVRYYNNKCH). 4 disulfides stabilise this stretch: C31–C78, C35–C57, C43–C62, and C47–C64.

Belongs to the long (4 C-C) scorpion toxin superfamily. Sodium channel inhibitor family. Beta subfamily. As to expression, expressed by the venom gland.

The protein resides in the secreted. Its function is as follows. Inhibits the sodium (Nav) currents in an apparent irreversible manner. Produces small depolarization and induces repetitive firing in squid axons. Is specific for arthropods (crickets, triatomides, crabs and squids), but is non-toxic to mice. The polypeptide is Toxin TdNa1 (Tityus discrepans (Venezuelan scorpion)).